A 515-amino-acid polypeptide reads, in one-letter code: 1-pyrroline-5-carboxylate dehydrogenase 2 (515 aa).

Catalysis depends on residues E286 and C320.

This sequence belongs to the aldehyde dehydrogenase family. RocA subfamily.

The catalysed reaction is L-glutamate 5-semialdehyde + NAD(+) + H2O = L-glutamate + NADH + 2 H(+). The protein operates within amino-acid degradation; L-proline degradation into L-glutamate; L-glutamate from L-proline: step 2/2. In terms of biological role, important for the use of proline as a sole carbon and energy source or a sole nitrogen source. This Bacillus subtilis (strain 168) protein is 1-pyrroline-5-carboxylate dehydrogenase 2.